We begin with the raw amino-acid sequence, 66 residues long: Alpha-conotoxin Vc1a (66 aa).

The first 25 residues, 1-25 (MGMRMMFTVFLLVVLATTVVSSTSG), serve as a signal peptide directing secretion. Residues 26–47 (RREFRGRNAAAKASDLVSLTDK) constitute a propeptide that is removed on maturation. Intrachain disulfides connect Cys51/Cys57 and Cys52/Cys65. Residues 53 to 55 (SDP) form a ser-Xaa-Pro motif, crucial for potent interaction with nAChR region. 2 key region for inhibition of alpha-9-alpha-10/CHRNA9-CHRNA10 nAChR regions span residues 54-56 (DPR) and 60-64 (DHPEI). The residue at position 55 (Pro55) is a 4-hydroxyproline. The residue at position 63 (Glu63) is a 4-carboxyglutamate. Cysteine amide is present on Cys65.

Belongs to the conotoxin A superfamily. In terms of processing, vc1.1 is described as having no post-translational modifications (except C-terminal amidation), whereas Vc1a contains a hydroxyproline at Pro-55 and a 4-carboxyglutamate at Glu-63 (and a C-terminal amidation). Hydroxylation of Pro-55 is not important for inhibition of alpha-9-alpha-10/CHRNA9-CHRNA10 nAChRs, since [P6O]Vc1.1 (Pro-55 hydroxylated) shows similar inhibition than native toxin (IC(50)=99.1 nM). In contrast, hydroxylation of Pro-55 seems to impair inhibition of HVA calcium channel currents, since [P6O]Vc1.1 has no effect on HVA calcium channel currents. In vivo, hydroxylation of Pro-55 seems to induce the loss of analgesic effects in rat models of neuropathic pain, since [P6O]Vc1.1 has no effect on mechanical allodynia. Post-translationally, gamma-carboxylation of Glu-63 is not important for inhibition of alpha-9-alpha-10/CHRNA9-CHRNA10 nAChRs, since [E14gamma]Vc1.1 (carboxyglutamate at Glu-63) shows similar inhibition than native toxin (IC(50)=65.3 nM). In contrast, gamma-carboxylation of Glu-63 seems to impair inhibition of HVA calcium channel currents, since [E14gamma]Vc1.1 has no effect on HVA calcium channel currents. In terms of processing, non-native isomers 'ribbon' (with disulfide connectivity C1-C4; C2-C3) and 'beads' (with disulfide connectivity C1-C2; C3-C4) of Vc1.1 also inhibit HVA calcium channel currents in rat DRG neurons (20-30% inhibition at 1 uM toxin). It has been shown that both reduced and alkylated Vc1.1 have no effect on HVA calcium channel currents. The observed activity can be attributed to specific isomers. [C3S]Vc1.1(1-8) mutant is C-terminally amidated. In terms of tissue distribution, expressed by the venom duct.

The protein localises to the secreted. Its function is as follows. Alpha-conotoxins act on postsynaptic membranes, they bind to the nicotinic acetylcholine receptors (nAChR) and thus inhibit them. This toxin (native toxin Vc1a; hydroxylated and gamma-carboxylated) blocks alpha-9-alpha-10/CHRNA9-CHRNA10 nAChRs (IC(50)=62.9 nM). In contrast to the non-post-translationally modified analog Vc1.1, Vc1a does not inhibit high voltage-activated (HVA) calcium channel currents. In vivo, in contrast to Vc1.1, Vc1a does not show analgesic effects in rat models of neuropathic pain. In terms of biological role, the synthetic peptide Vc1.1 (a non-hydroxylated and non-gamma-carboxylated analog of Vc1a) has two types of targets. It blocks alpha-9-alpha-10/CHRNA9-CHRNA10 nAChRs (on rat receptors, IC(50)=19-109 nM) (with preference for rat over human receptors) and inhibits high voltage-activated (HVA) calcium channel (Cav2.2, Cav2.3) currents by acting on GABA(B) receptors (GABBR1 and GABBR2) (IC(50)=1.7 nM). It also shows moderate inhibition on alpha-6/alpha-3-beta-2-beta-3 (CHRNA6/CHRNA3-CHRNB2-CHRNB3) (IC(50)=140 nM) and alpha-6/alpha-3-beta-4 (CHRNA6/CHRNA3-CHRNB4) (IC(50)=980 nM). On alpha-9-alpha-10/CHRNA9-CHRNA10 nAChR, it most likely interacts with the alpha-10(+)/alpha-9(-)interface of the receptor. In vivo, it acts as a powerful analgesic in rat models of neuropathic pain. This is Alpha-conotoxin Vc1a from Conus victoriae (Queen Victoria cone).